The sequence spans 902 residues: MFSSILRKVFGSRNDRLLKKLRKNVDAINALEAEFEKLSDEALKAKTDEFKARIEKGEALDNILVEAFATVREASKRVYGMRHFDVQMLGGQVLHEGKISEMRTGEGKTLTATLPTYLNALSGKGVHVVTVNDYLARRDAEWSNQLFTFLGMRVGCNIPGMSPEQKRDAYQADVTYGTNNEFGFDYLRDNMAFSPQDRVQRPLNYAVVDEVDSILIDEARTPLIISGQAEDSSELYRRINTIIPKLVQQEKEDEEGQEGDGDYTIDLKAKQIHLTERGQLHVEEILHEESLLPEGESLFAAGNISLLHHINAALRAHKLFSKDVDYIVKEDQIVIVDEHTGRTMEGRRWSEGLHQAVEAKEGVRIQNENQTLASITFQNYFRLYNKLAGMTGTADTEAFEFNHIYGLETVVIPTNRPMQRKDMPDLIYLTAEEKYEAIVEDIKACVKRGQPTLVGTVSIENSELISRILKKSKIPHKVLNAKFHEHEADIVAQAGKPGAVTIATNMAGRGTDIVLGGNWQAELEKIENPTESQIEKVKAAWKESHDAVLAAGGLHIIGTERHESRRIDNQLRGRSGRQGDPGSSRFYLSLDDALMRIFASEKMGNMMKRLGMERGEAIEHPWVTRAIENAQRKVEGRNFDIRKQLLEYDDVANDQRKVIYEQRNELLDEGDISETIAVIREDVVSSVVDEYIPPQSLEEMWDVSGLEERMRADFAVDLPIKTWLENDDKLYEEKLRERILNEVVDAYKQKEAVVGEQVLRQFEKAVMLQNLDSHWKEHLAAMDHLRQGIHLRGYAQKNPKQEYKRESFALFSEMLEALKVEVITILARVKVQAEEDVQKVEEQRRQADDVPKNFEHEDATAAPEEASDQVRTQVREGAKVGRNDPCPCGSGKKYKQCHGKLK.

ATP-binding positions include Q87, 105 to 109 (GEGKT), and D512. Disordered regions lie at residues 565–584 (RRIDNQLRGRSGRQGDPGSS) and 840–902 (VEEQ…GKLK). Basic and acidic residues-rich tracts occupy residues 840 to 859 (VEEQRRQADDVPKNFEHEDA) and 873 to 882 (QVREGAKVGR). The Zn(2+) site is built by C886, C888, C897, and H898. The span at 892–902 (KKYKQCHGKLK) shows a compositional bias: basic residues.

It belongs to the SecA family. In terms of assembly, monomer and homodimer. Part of the essential Sec protein translocation apparatus which comprises SecA, SecYEG and auxiliary proteins SecDF-YajC and YidC. Zn(2+) is required as a cofactor.

Its subcellular location is the cell inner membrane. It localises to the cytoplasm. The catalysed reaction is ATP + H2O + cellular proteinSide 1 = ADP + phosphate + cellular proteinSide 2.. Its function is as follows. Part of the Sec protein translocase complex. Interacts with the SecYEG preprotein conducting channel. Has a central role in coupling the hydrolysis of ATP to the transfer of proteins into and across the cell membrane, serving both as a receptor for the preprotein-SecB complex and as an ATP-driven molecular motor driving the stepwise translocation of polypeptide chains across the membrane. This is Protein translocase subunit SecA from Alteromonas mediterranea (strain DSM 17117 / CIP 110805 / LMG 28347 / Deep ecotype).